The chain runs to 129 residues: Thioredoxin H7 (129 aa).

The Thioredoxin domain occupies 6 to 129; sequence SSVHDVHSSM…LVKKIEQHRV (124 aa). Residues Cys55 and Cys58 each act as nucleophile in the active site. The cysteines at positions 55 and 58 are disulfide-linked.

The protein belongs to the thioredoxin family. Plant H-type subfamily.

The protein resides in the cytoplasm. In terms of biological role, probable thiol-disulfide oxidoreductase that may be involved in the redox regulation of a number of cytosolic enzymes. This is Thioredoxin H7 (TRX7) from Arabidopsis thaliana (Mouse-ear cress).